The chain runs to 149 residues: Macrodomain Ter protein (149 aa).

The protein belongs to the MatP family. In terms of assembly, homodimer.

The protein resides in the cytoplasm. In terms of biological role, required for spatial organization of the terminus region of the chromosome (Ter macrodomain) during the cell cycle. Prevents early segregation of duplicated Ter macrodomains during cell division. Binds specifically to matS, which is a 13 bp signature motif repeated within the Ter macrodomain. The polypeptide is Macrodomain Ter protein (Vibrio vulnificus (strain CMCP6)).